Consider the following 142-residue polypeptide: MLLSADDKKHIKAIMPSIAAHGDKFGGEASYRMFLVNPKTKTYFPSFDFHHNSKQITSHGKKVVDALNEAANHLDNIAGSMSKLSDLHAYDLRVDPGNFPLLAHNLLVVVAMHFPKQFDPATHKALDKFLATVSTVLTSKYR.

A Globin domain is found at 2-142; that stretch reads LLSADDKKHI…VSTVLTSKYR (141 aa). His-59 serves as a coordination point for O2. His-88 lines the heme b pocket.

This sequence belongs to the globin family. As to quaternary structure, heterotetramer of two alpha chains and two beta chains. Red blood cells.

In terms of biological role, involved in oxygen transport from the lung to the various peripheral tissues. The sequence is that of Hemoglobin subunit alpha-2 (hba2) from Xenopus laevis (African clawed frog).